The primary structure comprises 226 residues: Orotidine 5'-phosphate decarboxylase (226 aa).

Substrate contacts are provided by residues D8, K30, 58 to 67, T117, R177, Q186, G206, and R207; that span reads DLKIHDIPNT. Residue K60 is the Proton donor of the active site.

Belongs to the OMP decarboxylase family. Type 1 subfamily. Homodimer.

It carries out the reaction orotidine 5'-phosphate + H(+) = UMP + CO2. The protein operates within pyrimidine metabolism; UMP biosynthesis via de novo pathway; UMP from orotate: step 2/2. In terms of biological role, catalyzes the decarboxylation of orotidine 5'-monophosphate (OMP) to uridine 5'-monophosphate (UMP). The protein is Orotidine 5'-phosphate decarboxylase of Campylobacter jejuni subsp. jejuni serotype O:6 (strain 81116 / NCTC 11828).